Consider the following 344-residue polypeptide: Holliday junction branch migration complex subunit RuvB (344 aa).

The large ATPase domain (RuvB-L) stretch occupies residues 1–183 (MLDERLISSH…FGISCRLDFY (183 aa)). Residues Ile22, Arg23, Gly64, Lys67, Thr68, Thr69, 130 to 132 (EDY), Arg173, Tyr183, and Arg220 contribute to the ATP site. Thr68 is a binding site for Mg(2+). The interval 184-254 (TPLELSEIIL…LAKWALEMLE (71 aa)) is small ATPAse domain (RuvB-S). The interval 257–344 (ECGLDVMDRM…LEGKGLFSDA (88 aa)) is head domain (RuvB-H). 2 residues coordinate DNA: Lys312 and Arg317.

It belongs to the RuvB family. As to quaternary structure, homohexamer. Forms an RuvA(8)-RuvB(12)-Holliday junction (HJ) complex. HJ DNA is sandwiched between 2 RuvA tetramers; dsDNA enters through RuvA and exits via RuvB. An RuvB hexamer assembles on each DNA strand where it exits the tetramer. Each RuvB hexamer is contacted by two RuvA subunits (via domain III) on 2 adjacent RuvB subunits; this complex drives branch migration. In the full resolvosome a probable DNA-RuvA(4)-RuvB(12)-RuvC(2) complex forms which resolves the HJ.

It is found in the cytoplasm. It carries out the reaction ATP + H2O = ADP + phosphate + H(+). The RuvA-RuvB-RuvC complex processes Holliday junction (HJ) DNA during genetic recombination and DNA repair, while the RuvA-RuvB complex plays an important role in the rescue of blocked DNA replication forks via replication fork reversal (RFR). RuvA specifically binds to HJ cruciform DNA, conferring on it an open structure. The RuvB hexamer acts as an ATP-dependent pump, pulling dsDNA into and through the RuvAB complex. RuvB forms 2 homohexamers on either side of HJ DNA bound by 1 or 2 RuvA tetramers; 4 subunits per hexamer contact DNA at a time. Coordinated motions by a converter formed by DNA-disengaged RuvB subunits stimulates ATP hydrolysis and nucleotide exchange. Immobilization of the converter enables RuvB to convert the ATP-contained energy into a lever motion, pulling 2 nucleotides of DNA out of the RuvA tetramer per ATP hydrolyzed, thus driving DNA branch migration. The RuvB motors rotate together with the DNA substrate, which together with the progressing nucleotide cycle form the mechanistic basis for DNA recombination by continuous HJ branch migration. Branch migration allows RuvC to scan DNA until it finds its consensus sequence, where it cleaves and resolves cruciform DNA. This chain is Holliday junction branch migration complex subunit RuvB, found in Syntrophomonas wolfei subsp. wolfei (strain DSM 2245B / Goettingen).